Consider the following 172-residue polypeptide: Adenine phosphoribosyltransferase (172 aa).

Belongs to the purine/pyrimidine phosphoribosyltransferase family. Homodimer.

It is found in the cytoplasm. The enzyme catalyses AMP + diphosphate = 5-phospho-alpha-D-ribose 1-diphosphate + adenine. It participates in purine metabolism; AMP biosynthesis via salvage pathway; AMP from adenine: step 1/1. Its function is as follows. Catalyzes a salvage reaction resulting in the formation of AMP, that is energically less costly than de novo synthesis. This is Adenine phosphoribosyltransferase from Methanococcus maripaludis (strain DSM 14266 / JCM 13030 / NBRC 101832 / S2 / LL).